Reading from the N-terminus, the 156-residue chain is Transcription antitermination protein NusB (156 aa).

It belongs to the NusB family.

Its function is as follows. Involved in transcription antitermination. Required for transcription of ribosomal RNA (rRNA) genes. Binds specifically to the boxA antiterminator sequence of the ribosomal RNA (rrn) operons. The chain is Transcription antitermination protein NusB from Syntrophotalea carbinolica (strain DSM 2380 / NBRC 103641 / GraBd1) (Pelobacter carbinolicus).